A 670-amino-acid chain; its full sequence is DNA ligase (670 aa).

NAD(+) contacts are provided by residues 32–36, 81–82, and E113; these read DAEYD and SL. Catalysis depends on K115, which acts as the N6-AMP-lysine intermediate. NAD(+)-binding residues include R136, E173, K290, and K314. The Zn(2+) site is built by C408, C411, C426, and C432. The region spanning 592–670 is the BRCT domain; the sequence is ESDSPFAGKT…EAEMIRLLGE (79 aa).

Belongs to the NAD-dependent DNA ligase family. LigA subfamily. Mg(2+) is required as a cofactor. Requires Mn(2+) as cofactor.

The catalysed reaction is NAD(+) + (deoxyribonucleotide)n-3'-hydroxyl + 5'-phospho-(deoxyribonucleotide)m = (deoxyribonucleotide)n+m + AMP + beta-nicotinamide D-nucleotide.. DNA ligase that catalyzes the formation of phosphodiester linkages between 5'-phosphoryl and 3'-hydroxyl groups in double-stranded DNA using NAD as a coenzyme and as the energy source for the reaction. It is essential for DNA replication and repair of damaged DNA. The chain is DNA ligase from Yersinia pestis bv. Antiqua (strain Antiqua).